Reading from the N-terminus, the 486-residue chain is Matrilin-3 (486 aa).

Positions 1 to 28 (MPRPAPARRLPGLLLLLWPLLLLPSAAP) are cleaved as a signal peptide. A disordered region spans residues 32–75 (ARPGFRRLETRGPGGSPGRRPSPAAPDGAPASGTSEPGRARGAG). The segment covering 49–64 (GRRPSPAAPDGAPASG) has biased composition (low complexity). Positions 83–258 (DLVFIIDSSR…GVIEKLSSRF (176 aa)) constitute a VWFA domain. Arg198 carries the omega-N-methylarginine modification. EGF-like domains are found at residues 264 to 305 (ALDP…KTCS), 306 to 347 (ALDR…KTCS), 348 to 389 (AQDK…KTCS), and 390 to 431 (VRDK…KTCS). Disulfide bonds link Cys268–Cys279, Cys275–Cys289, Cys291–Cys304, Cys310–Cys321, Cys317–Cys331, Cys333–Cys346, Cys352–Cys363, Cys359–Cys373, Cys375–Cys388, Cys394–Cys405, Cys401–Cys415, and Cys417–Cys430. The residue at position 441 (Ser441) is a Phosphoserine; by FAM20C. Thr442 is modified (phosphothreonine; by FAM20C). Positions 456 to 480 (DKVSSYLQRLNTKLDDILEKLKINE) form a coiled coil.

In terms of assembly, can form homooligomers (monomers, dimers, trimers and tetramers) and heterooligomers with matrilin-1. Interacts with COMP. Component of a complex containing at least CRELD2, MANF, MATN3 and PDIA4. In terms of tissue distribution, expressed only in cartilaginous tissues, such as vertebrae, ribs and shoulders.

It localises to the secreted. In terms of biological role, major component of the extracellular matrix of cartilage and may play a role in the formation of extracellular filamentous networks. The sequence is that of Matrilin-3 (MATN3) from Homo sapiens (Human).